A 304-amino-acid chain; its full sequence is Sulfate adenylyltransferase subunit 2 (304 aa).

It belongs to the PAPS reductase family. CysD subfamily. Heterodimer composed of CysD, the smaller subunit, and CysNC.

It catalyses the reaction sulfate + ATP + H(+) = adenosine 5'-phosphosulfate + diphosphate. It functions in the pathway sulfur metabolism; hydrogen sulfide biosynthesis; sulfite from sulfate: step 1/3. In terms of biological role, with CysN forms the ATP sulfurylase (ATPS) that catalyzes the adenylation of sulfate producing adenosine 5'-phosphosulfate (APS) and diphosphate, the first enzymatic step in sulfur assimilation pathway. APS synthesis involves the formation of a high-energy phosphoric-sulfuric acid anhydride bond driven by GTP hydrolysis by CysN coupled to ATP hydrolysis by CysD. The chain is Sulfate adenylyltransferase subunit 2 from Xylella fastidiosa (strain 9a5c).